Consider the following 130-residue polypeptide: Large ribosomal subunit protein uL14 (130 aa).

Belongs to the universal ribosomal protein uL14 family. In terms of assembly, part of the 50S ribosomal subunit. Forms a cluster with proteins L3 and L19. In the 70S ribosome, L14 and L19 interact and together make contacts with the 16S rRNA in bridges B5 and B8.

Binds to 23S rRNA. Forms part of two intersubunit bridges in the 70S ribosome. This Leptospira biflexa serovar Patoc (strain Patoc 1 / Ames) protein is Large ribosomal subunit protein uL14.